The primary structure comprises 131 residues: F(420)H(2) dehydrogenase subunit O (131 aa).

Residues Cys58, Cys63, and Cys66 each coordinate [2Fe-2S] cluster.

It belongs to the FpoO family. The FPO complex is composed of at least 13 different subunits. Requires [2Fe-2S] cluster as cofactor.

It carries out the reaction methanophenazine + reduced coenzyme F420-(gamma-L-Glu)(n) = dihydromethanophenazine + oxidized coenzyme F420-(gamma-L-Glu)(n) + H(+). Component of the F(420)H(2) dehydrogenase (FPO complex) which is part of the energy-conserving F(420)H(2):heterodisulfide oxidoreductase system. The membrane-bound electron transfer system of the complex plays an important role in the metabolism of methylotrophic methanogens when the organisms grow on methanol or methylamines. Catalyzes the oxidation of methanophenazine to dihydromethanophenazine. It shuttles electrons from F(420)H(2), via FAD and iron-sulfur (Fe-S) centers, to methanophenazine (an electron carrier in the membrane). It couples the redox reaction to proton translocation (for every two electrons transferred, two hydrogen ions are translocated across the cytoplasmic membrane), and thus conserves the redox energy in a proton gradient. It also catalyzes the oxidation of F(420)H(2) with quinones such as 2,3-dimethyl-1,4-naphthoquinone, 2-methyl-1,4-naphthoquinone and tetramethyl-p-benzoquinone. This chain is F(420)H(2) dehydrogenase subunit O (fpoO), found in Methanosarcina mazei (strain ATCC BAA-159 / DSM 3647 / Goe1 / Go1 / JCM 11833 / OCM 88) (Methanosarcina frisia).